The chain runs to 460 residues: Glycine--tRNA ligase (460 aa).

Positions 98 and 172 each coordinate substrate. ATP contacts are provided by residues 204–206 (RNE), 214–219 (FRTREF), 288–289 (EL), and 332–335 (GADR). 219–223 (FEQME) serves as a coordination point for substrate. A substrate-binding site is contributed by 328-332 (EPSLG).

It belongs to the class-II aminoacyl-tRNA synthetase family. In terms of assembly, homodimer.

The protein resides in the cytoplasm. It carries out the reaction tRNA(Gly) + glycine + ATP = glycyl-tRNA(Gly) + AMP + diphosphate. Functionally, catalyzes the attachment of glycine to tRNA(Gly). The polypeptide is Glycine--tRNA ligase (Geobacillus kaustophilus (strain HTA426)).